The following is a 361-amino-acid chain: MLLWLTNFLSQHFHAFRVFNYLTFRSIVSALTALILVLSLSPRLIKYLVSLQVGQMVRNDGPQTHLKKSGTPTMGGVLIIVAIVISVLLWGDLSNRFIWVILLVTVAFSAIGWMDDYRKIIRKNSKGLSARSKYLLQSIIGALAAVYLYFSATTGAETALVIPFLKNVLPNLGLFYIVLAYFVIVGSSNAVNLTDGLDGLALMPTVMIGAALGVFAYTTGNHFFAQYLAIPYIPGAGEVVVFCSALVGAGLGFLWYNTYPAQVFMGDVGSLGLGAALGVTAVVVRQELVYFLMGGIFVAETLSVILQVGYFKLSGGKRIFRMAPLHHHFELKGWPEPKVIVRFWIITFILVLCGLATLKLR.

10 helical membrane passes run 18–38 (VFNY…ILVL), 73–93 (TMGG…WGDL), 97–117 (FIWV…MDDY), 135–155 (LLQS…ATTG), 168–188 (VLPN…VGSS), 196–216 (GLDG…GVFA), 235–255 (GAGE…GFLW), 263–283 (VFMG…TAVV), 288–308 (LVYF…ILQV), and 338–358 (KVIV…LATL).

The protein belongs to the glycosyltransferase 4 family. MraY subfamily. Requires Mg(2+) as cofactor.

It is found in the cell inner membrane. The enzyme catalyses UDP-N-acetyl-alpha-D-muramoyl-L-alanyl-gamma-D-glutamyl-meso-2,6-diaminopimeloyl-D-alanyl-D-alanine + di-trans,octa-cis-undecaprenyl phosphate = di-trans,octa-cis-undecaprenyl diphospho-N-acetyl-alpha-D-muramoyl-L-alanyl-D-glutamyl-meso-2,6-diaminopimeloyl-D-alanyl-D-alanine + UMP. Its pathway is cell wall biogenesis; peptidoglycan biosynthesis. In terms of biological role, catalyzes the initial step of the lipid cycle reactions in the biosynthesis of the cell wall peptidoglycan: transfers peptidoglycan precursor phospho-MurNAc-pentapeptide from UDP-MurNAc-pentapeptide onto the lipid carrier undecaprenyl phosphate, yielding undecaprenyl-pyrophosphoryl-MurNAc-pentapeptide, known as lipid I. This is Phospho-N-acetylmuramoyl-pentapeptide-transferase from Coxiella burnetii (strain CbuK_Q154) (Coxiella burnetii (strain Q154)).